A 90-amino-acid polypeptide reads, in one-letter code: Co-chaperonin GroES (90 aa).

Belongs to the GroES chaperonin family. In terms of assembly, heptamer of 7 subunits arranged in a ring. Interacts with the chaperonin GroEL.

Its subcellular location is the cytoplasm. In terms of biological role, together with the chaperonin GroEL, plays an essential role in assisting protein folding. The GroEL-GroES system forms a nano-cage that allows encapsulation of the non-native substrate proteins and provides a physical environment optimized to promote and accelerate protein folding. GroES binds to the apical surface of the GroEL ring, thereby capping the opening of the GroEL channel. In Fusobacterium nucleatum subsp. polymorphum (Fusobacterium polymorphum), this protein is Co-chaperonin GroES.